A 75-amino-acid chain; its full sequence is Small ribosomal subunit protein bS18 (75 aa).

Belongs to the bacterial ribosomal protein bS18 family. Part of the 30S ribosomal subunit. Forms a tight heterodimer with protein bS6.

Its function is as follows. Binds as a heterodimer with protein bS6 to the central domain of the 16S rRNA, where it helps stabilize the platform of the 30S subunit. This Desulforudis audaxviator (strain MP104C) protein is Small ribosomal subunit protein bS18.